The primary structure comprises 340 residues: Cobalt-precorrin-5B C(1)-methyltransferase (340 aa).

This sequence belongs to the CbiD family.

The catalysed reaction is Co-precorrin-5B + S-adenosyl-L-methionine = Co-precorrin-6A + S-adenosyl-L-homocysteine. Its pathway is cofactor biosynthesis; adenosylcobalamin biosynthesis; cob(II)yrinate a,c-diamide from sirohydrochlorin (anaerobic route): step 6/10. In terms of biological role, catalyzes the methylation of C-1 in cobalt-precorrin-5B to form cobalt-precorrin-6A. The sequence is that of Cobalt-precorrin-5B C(1)-methyltransferase from Pyrobaculum aerophilum (strain ATCC 51768 / DSM 7523 / JCM 9630 / CIP 104966 / NBRC 100827 / IM2).